Consider the following 1640-residue polypeptide: RING finger protein 17 (1640 aa).

The RING-type zinc finger occupies 30-73; sequence CTRCGRKVSVASGDHHKFPCGHAFCELCLLAPQEYTTSKCTDCE. A Phosphoserine modification is found at serine 134. Lysine 229 carries the N6-acetyllysine modification. Disordered stretches follow at residues 348–376 and 413–435; these read TDET…TKEM and DDPI…APVG. Over residues 360 to 373 the composition is skewed to basic and acidic residues; that stretch reads APDRHLEGKKKQPT. Tudor domains are found at residues 751–809 and 985–1044; these read CPLQ…FLEP and KWEC…LKTM. A compositionally biased stretch (basic and acidic residues) spans 1170 to 1184; the sequence is NEHKVPDSKGKKSES. Positions 1170–1191 are disordered; the sequence is NEHKVPDSKGKKSESRSTGCYR. 2 Tudor domains span residues 1246–1303 and 1496–1556; these read SWKK…PDTP and DFSS…LMQY.

Interacts with MXD1, MXD3, MXD4, MXI1 and PIWIL1. Self-associates. Expressed at high levels in adult testis. Expressed in male germ cells (at protein level). Expressed at lower levels in adult thyroid, submaxillary gland, ovary and epididymis.

It is found in the cytoplasm. The protein resides in the nucleus. In terms of biological role, seems to be involved in regulation of transcriptional activity of MYC. In vitro, inhibits DNA-binding activity of Mad-MAX heterodimers. Can recruit Mad transcriptional repressors (MXD1, MXD3, MXD4 and MXI1) to the cytoplasm. May be involved in spermiogenesis. The protein is RING finger protein 17 (Rnf17) of Mus musculus (Mouse).